Consider the following 478-residue polypeptide: Glycogen synthase (478 aa).

K16 lines the ADP-alpha-D-glucose pocket.

This sequence belongs to the glycosyltransferase 1 family. Bacterial/plant glycogen synthase subfamily.

The enzyme catalyses [(1-&gt;4)-alpha-D-glucosyl](n) + ADP-alpha-D-glucose = [(1-&gt;4)-alpha-D-glucosyl](n+1) + ADP + H(+). The protein operates within glycan biosynthesis; glycogen biosynthesis. Functionally, synthesizes alpha-1,4-glucan chains using ADP-glucose. The chain is Glycogen synthase from Lachnospira eligens (strain ATCC 27750 / DSM 3376 / VPI C15-48 / C15-B4) (Eubacterium eligens).